An 81-amino-acid chain; its full sequence is DGASIFSANCASCHMGGKNVVNAAKTLKKEDLVKYGKDSVEAIVTQVTKGMGAMPAFGGRLSAEDIEAVANYVLAQAEKGW.

Heme c contacts are provided by C10, C13, H14, and M54.

This sequence belongs to the cytochrome c family. PetJ subfamily. Monomer. Post-translationally, binds 1 heme c group covalently per subunit.

The protein localises to the cellular thylakoid lumen. Its function is as follows. Functions as an electron carrier between membrane-bound cytochrome b6-f and photosystem I in oxygenic photosynthesis. This is Cytochrome c6 (petJ) from Microcystis aeruginosa.